The sequence spans 250 residues: Proteasome subunit alpha type-2 (250 aa).

A Glycyl lysine isopeptide (Lys-Gly) (interchain with G-Cter in ubiquitin) cross-link involves residue K108.

It belongs to the peptidase T1A family. In terms of assembly, the 26S proteasome consists of a 20S proteasome core and two 19S regulatory subunits. The 20S proteasome core is composed of 28 subunits that are arranged in four stacked rings, resulting in a barrel-shaped structure. The two end rings are each formed by seven alpha subunits, and the two central rings are each formed by seven beta subunits. The catalytic chamber with the active sites is on the inside of the barrel.

It is found in the cytoplasm. Its subcellular location is the nucleus. Functionally, the proteasome degrades poly-ubiquitinated proteins in the cytoplasm and in the nucleus. It is essential for the regulated turnover of proteins and for the removal of misfolded proteins. The proteasome is a multicatalytic proteinase complex that is characterized by its ability to cleave peptides with Arg, Phe, Tyr, Leu, and Glu adjacent to the leaving group at neutral or slightly basic pH. It has an ATP-dependent proteolytic activity. In Saccharomyces cerevisiae (strain ATCC 204508 / S288c) (Baker's yeast), this protein is Proteasome subunit alpha type-2 (PRE8).